A 515-amino-acid chain; its full sequence is Cytochrome P450 monooxygenase nsrP (515 aa).

A helical membrane pass occupies residues 20 to 40; that stretch reads FGTAAFLAVLLSALAFLSYTP. 3 N-linked (GlcNAc...) asparagine glycosylation sites follow: N84, N406, and N411. C452 contributes to the heme binding site.

It belongs to the cytochrome P450 family. The cofactor is heme.

The protein localises to the membrane. Its pathway is secondary metabolite biosynthesis. In terms of biological role, cytochrome P450 monooxygenase; part of the gene cluster that mediates the biosynthesis of the tetrahydroxanthone dimer neosartorin, which exhibits antibacterial activity. The two different monomeric units appear to be synthesized by the same set of enzymes, among which the Baeyer-Villiger monooxygenase nsrF is the key enzyme for the divergence of the biosynthetic routes. The pathway begins with the synthesis of atrochrysone thioester by the polyketide synthase nsrB. The atrochrysone carboxyl ACP thioesterase nsrC then breaks the thioester bond and releases the atrochrysone carboxylic acid from AacuL. Atrochrysone carboxylic acid is decarboxylated by the decarboxylase nsrE, and oxidized by the anthrone oxygenase nsrD to yield emodin. Emodin is then reduced to emodin hydroquinone by the oxidoreductase nsrR. A-ring reduction by the short chain dehydrogenase nsrJ, dehydration by the scytalone dehydratase-like protein nsrI and probable spontaneous re-oxidation, results in overall deoxygenation to chrysophanol. The Baeyer-Villiger monooxygenase nsrF accepts chrysophanol as a substrate to insert one oxygen atom at two different positions to yield the precursors of both monomric units. NsrF is promiscuous/flexible in interacting with the 2 (non methylated and methylated) aromatic rings of chrysophanol, thus diverging the biosynthetic pathway at this point. After the hydrolysis of the lactones, methylesterification by the methyltransferase nsrG yields respectively moniliphenone and 2,2',6'-trihydroxy-4-methyl-6-methoxya-cyldiphenylmethanone. The next steps are the hydroxylation by the FAD-dependent monooxygenase nsrK, followed by isomerization by the monooxygenase nsrQ. The short chain dehydrogenase/reductase nsrO then catalyzes the C-5 ketoreduction to give the xanthone skeleton of blennolide C and 5-acetylblennolide A. The acetyltransferase nsrL has a strict substrate specificity and uses only blennolide A but not blennolide C to yield 5-acetylblennolide A as the single-acetylated product. In the final step of the biosynthesis, the heterodimerization of the 2 xanthones, blennolide C and 5-acetylblennolide A, is catalyzed by the cytochrome P450 monooxygenase nsrP. NsrP can utilize at least three different xanthones as its substrates to perform the dimerization reaction. The protein is Cytochrome P450 monooxygenase nsrP of Aspergillus novofumigatus (strain IBT 16806).